Here is a 141-residue protein sequence, read N- to C-terminus: Acetyltransferase YpeA (141 aa).

The N-acetyltransferase domain maps to 1–141 (MEIRVFRQED…GKRLIEDEEY (141 aa)).

This sequence belongs to the acetyltransferase family. YpeA subfamily.

This is Acetyltransferase YpeA (ypeA) from Escherichia coli (strain K12).